The primary structure comprises 444 residues: Elongation factor 1-alpha (444 aa).

Positions 15–238 (KPHINLAVVG…DSFQPPQRPV (224 aa)) constitute a tr-type G domain. A G1 region spans residues 24 to 31 (GHVDNGKS). Residue 24-31 (GHVDNGKS) participates in GTP binding. A Mg(2+)-binding site is contributed by S31. A G2 region spans residues 80–84 (GVTIE). Residues 101–104 (DLPG) are G3. GTP is bound by residues 101-105 (DLPGH) and 163-166 (NKMD). A G4 region spans residues 163 to 166 (NKMD). The tract at residues 202–204 (SAI) is G5.

Belongs to the TRAFAC class translation factor GTPase superfamily. Classic translation factor GTPase family. EF-Tu/EF-1A subfamily.

The protein resides in the cytoplasm. The enzyme catalyses GTP + H2O = GDP + phosphate + H(+). GTP hydrolase that promotes the GTP-dependent binding of aminoacyl-tRNA to the A-site of ribosomes during protein biosynthesis. This chain is Elongation factor 1-alpha, found in Pyrobaculum aerophilum (strain ATCC 51768 / DSM 7523 / JCM 9630 / CIP 104966 / NBRC 100827 / IM2).